We begin with the raw amino-acid sequence, 379 residues long: MANILNLKHLLTLALILLALATKSSTSSSSSITRVKGIYWLENPFFPPTTVDTSLFTHIFYSFLTPNNITYKLEISSSQILSLNTFTKTFKTKSPPAATLFSIGGAGSNSSLLAFIASDPPACAAFINSTIDVARTFGFDGIDLDWEFPKNTKEMNDLGEMLFQWRKAISDEGATTGRPPLLLTAAVYFAVNFSIYGEPRMYPVNSINENLDWVNVMSYELRGPRSNKTGAPSGTFDPKSNVSVVSGLLSWIHSGVVPEKLVMGMPLYGKSWKLRDPNVHGIGAPSVGSGPGVNGLMAYFQVLDFNRQKSAKVEYDVDTASVYSYSGSTWIGYDNPFTVSIKVGFAQALKLRGYFFWVAGLDTLDWKIATQASKAWKLV.

Positions 1-26 (MANILNLKHLLTLALILLALATKSST) are cleaved as a signal peptide. The GH18 domain occupies 34–379 (RVKGIYWLEN…TQASKAWKLV (346 aa)). N68, N109, and N128 each carry an N-linked (GlcNAc...) asparagine glycan. E147 (proton donor) is an active-site residue. Residues N192, N227, and N241 are each glycosylated (N-linked (GlcNAc...) asparagine).

It belongs to the glycosyl hydrolase 18 family. Chitinase class V subfamily.

It catalyses the reaction Random endo-hydrolysis of N-acetyl-beta-D-glucosaminide (1-&gt;4)-beta-linkages in chitin and chitodextrins.. Its pathway is glycan degradation; chitin degradation. Possesses chitinase activity in vitro toward glycol chitin, carboxymethyl-chitin, colloidal chitin, and the chitin oligosaccharides (N-acetylglucosamine) (GlcNAc)6 and (GlcNAc)5. Hydrolyzes (GlcNAc)6 into (GlcNAc)4 and (GlcNAc)2, or two (GlcNAc)3 molecules. Has the capacity to reduce hyphal growth of the fungus Trichoderma viride in an agar-plate bioassay. In Medicago truncatula (Barrel medic), this protein is Class V chitinase CHIT5b.